Here is a 303-residue protein sequence, read N- to C-terminus: Sulfate adenylyltransferase subunit 2 (303 aa).

This sequence belongs to the PAPS reductase family. CysD subfamily. As to quaternary structure, heterodimer composed of CysD, the smaller subunit, and CysN.

The enzyme catalyses sulfate + ATP + H(+) = adenosine 5'-phosphosulfate + diphosphate. It participates in sulfur metabolism; hydrogen sulfide biosynthesis; sulfite from sulfate: step 1/3. Its function is as follows. With CysN forms the ATP sulfurylase (ATPS) that catalyzes the adenylation of sulfate producing adenosine 5'-phosphosulfate (APS) and diphosphate, the first enzymatic step in sulfur assimilation pathway. APS synthesis involves the formation of a high-energy phosphoric-sulfuric acid anhydride bond driven by GTP hydrolysis by CysN coupled to ATP hydrolysis by CysD. This chain is Sulfate adenylyltransferase subunit 2, found in Bacteroides fragilis (strain YCH46).